Consider the following 290-residue polypeptide: Inner membrane protein YebZ (290 aa).

Residues 1-10 (MLAFTWIALR) are Periplasmic-facing. The helical transmembrane segment at 11-31 (FIHFTSLMLVFGFAMYGAWLA) threads the bilayer. At 32–49 (PLTIRRLLAKRFLRLQQH) the chain is on the cytoplasmic side. A helical membrane pass occupies residues 50–70 (AAVWSLISATAMLAVQGGLMG). Residues 71 to 89 (TGWTDVFSPNIWQAVLQTQ) lie on the Periplasmic side of the membrane. The chain crosses the membrane as a helical span at residues 90-110 (FGGIWLWQIVLALVTLIVALM). The Cytoplasmic segment spans residues 111-117 (QPRNMPR). Residues 118 to 138 (LLFMLTTAQFILLAGVGHATL) form a helical membrane-spanning segment. At 139–151 (NEGVTAKIHQTNH) the chain is on the periplasmic side. A helical membrane pass occupies residues 152-172 (AIHLICAAAWFGGLLPVLWCM). Topologically, residues 173–195 (QLIKGRWRHQAIQALMRFSWCGH) are cytoplasmic. The helical transmembrane segment at 196–216 (FAVIGVLASGVLNALLITGFP) threads the bilayer. Residues 217 to 222 (PTLTTY) lie on the Periplasmic side of the membrane. A helical membrane pass occupies residues 223 to 243 (WGQLLLLKAILVMIMVVIALA). At 244 to 260 (NRYVLVPRMRQDEDRAA) the chain is on the cytoplasmic side. Residues 261–281 (PWFVWMTKLEWAIGAVVLVII) form a helical membrane-spanning segment. Residues 282–290 (SLLATLEPF) are Periplasmic-facing.

It belongs to the CopD family.

Its subcellular location is the cell inner membrane. This is Inner membrane protein YebZ (yebZ) from Escherichia coli (strain K12).